A 433-amino-acid chain; its full sequence is Zinc finger protein CONSTANS-LIKE 15 (433 aa).

Residues C9, C12, C32, H37, C52, C55, C75, and H80 each coordinate Zn(2+). The segment at 9 to 51 (CDFCGERTAVLFCRADTAKLCLPCDQQVHTANLLSRKHVRSQI) adopts a B box-type 1; atypical zinc-finger fold. A B box-type 2; atypical zinc finger spans residues 52–94 (CDNCGNEPVSVRCFTDNLILCQECDWDVHGSCSVSDAHVRSAV). The disordered stretch occupies residues 319 to 353 (DDYKRSTSGQVQPTKSESNNRPITFGSEKGSNSSS). The segment covering 324–340 (STSGQVQPTKSESNNRP) has biased composition (polar residues). Residues 374-398 (TKADLERLAQNRGDAMQRYKEKRKT) adopt a coiled-coil conformation. The 43-residue stretch at 385-427 (RGDAMQRYKEKRKTRRYDKTIRYESRKARADTRLRVRGRFVKA) folds into the CCT domain.

It belongs to the CONSTANS family.

It localises to the nucleus. This is Zinc finger protein CONSTANS-LIKE 15 (COL15) from Arabidopsis thaliana (Mouse-ear cress).